Here is a 599-residue protein sequence, read N- to C-terminus: Microtubule-associated protein 70-2 (599 aa).

The tract at residues M1–L30 is disordered. The stretch at D43–K349 forms a coiled coil. Residues I227 to V460 form a required for targeting to microtubules region. Disordered stretches follow at residues L357–L453 and A557–Q599. Over residues R404 to S420 the composition is skewed to low complexity. Residues L533–R570 are a coiled coil. Residues A557–A568 are compositionally biased toward basic and acidic residues.

Belongs to the MAP70 family.

It is found in the cytoplasm. The protein resides in the cytoskeleton. Plant-specific protein that interact with microtubules. This is Microtubule-associated protein 70-2 (MAP70.2) from Oryza sativa subsp. japonica (Rice).